A 216-amino-acid chain; its full sequence is 3-keto-L-gulonate-6-phosphate decarboxylase UlaD (216 aa).

Position 11 (Asp11) interacts with substrate. 2 residues coordinate Mg(2+): Glu33 and Asp62. Arg192 is a binding site for substrate.

It belongs to the HPS/KGPDC family. KGPDC subfamily. In terms of assembly, homodimer. Requires Mg(2+) as cofactor.

It carries out the reaction 3-dehydro-L-gulonate 6-phosphate + H(+) = L-xylulose 5-phosphate + CO2. Its pathway is cofactor degradation; L-ascorbate degradation; D-xylulose 5-phosphate from L-ascorbate: step 2/4. In terms of biological role, catalyzes the decarboxylation of 3-keto-L-gulonate-6-P into L-xylulose-5-P. Is involved in the anaerobic L-ascorbate utilization. This Escherichia fergusonii (strain ATCC 35469 / DSM 13698 / CCUG 18766 / IAM 14443 / JCM 21226 / LMG 7866 / NBRC 102419 / NCTC 12128 / CDC 0568-73) protein is 3-keto-L-gulonate-6-phosphate decarboxylase UlaD.